A 330-amino-acid polypeptide reads, in one-letter code: Phytanoyl-CoA hydroxylase-interacting protein (330 aa).

The region spanning 6–115 is the Fibronectin type-III domain; it reads TPHSIEINNI…ETVEFCTGDY (110 aa). Residues Asn-14 and Asn-325 are each glycosylated (N-linked (GlcNAc...) asparagine).

The protein belongs to the PHYHIP family. In terms of assembly, interacts with PHYH and ADGRB1. Highly expressed in the brain.

Its function is as follows. Its interaction with PHYH suggests a role in the development of the central system. In Homo sapiens (Human), this protein is Phytanoyl-CoA hydroxylase-interacting protein (PHYHIP).